The following is a 92-amino-acid chain: Protease inhibitors (92 aa).

Positions 1 to 19 are cleaved as a signal peptide; sequence MKFALALCAAVLLVVLVQA. Pacifastin domains are found at residues 20–54 and 57–92; these read EEKC…CQPA and EISC…CPNQ. Intrachain disulfides connect Cys-23–Cys-38, Cys-33–Cys-51, Cys-36–Cys-46, Cys-60–Cys-75, Cys-70–Cys-89, and Cys-73–Cys-84. Thr-65 is a glycosylation site (O-linked (Fuc) threonine).

It belongs to the protease inhibitor I19 family. Brain and fat body.

The protein resides in the secreted. Its function is as follows. Both LCMI I and II are inhibitors of chymotrypsin and elastase (in vitro). They both inhibit the prophenol oxidase activation cascade. The protein is Protease inhibitors of Locusta migratoria (Migratory locust).